Here is a 300-residue protein sequence, read N- to C-terminus: Tyrosine recombinase XerC (300 aa).

A Core-binding (CB) domain is found at 2 to 88; it reads ENVNFTLNLF…SLRSFYKFLL (87 aa). The Tyr recombinase domain maps to 109-294; the sequence is KIPHFLYPDE…TKDHLRYVYL (186 aa). Catalysis depends on residues arginine 149, lysine 173, histidine 246, arginine 249, and histidine 272. Residue tyrosine 281 is the O-(3'-phospho-DNA)-tyrosine intermediate of the active site.

The protein belongs to the 'phage' integrase family. XerC subfamily. Forms a cyclic heterotetrameric complex composed of two molecules of XerC and two molecules of XerD.

The protein localises to the cytoplasm. Functionally, site-specific tyrosine recombinase, which acts by catalyzing the cutting and rejoining of the recombining DNA molecules. The XerC-XerD complex is essential to convert dimers of the bacterial chromosome into monomers to permit their segregation at cell division. It also contributes to the segregational stability of plasmids. The sequence is that of Tyrosine recombinase XerC from Anoxybacillus flavithermus (strain DSM 21510 / WK1).